The chain runs to 408 residues: Protein BTN1 (408 aa).

The N-terminal stretch at 1 to 30 (MSDKSHQIYCYFWLFGLINNVLYVVILSAA) is a signal peptide. The next 7 helical transmembrane spans lie at 42 to 62 (LVLL…PFFI), 80 to 100 (LGMF…ISFA), 128 to 148 (SGTG…TSIF), 150 to 170 (VPVK…LFYF), 238 to 258 (TVYL…LFPI), 323 to 343 (WFYV…EGFL), and 369 to 389 (GAVS…GLGL).

It belongs to the battenin family.

It is found in the vacuole membrane. Functionally, plays a role in vacuolar arginine transport. Involved in pH homeostasis. May be involved in ion homeostasis together with IST2. Not necessary for mitochondrial function or ATP synthase degradation. The protein is Protein BTN1 (YHC3) of Saccharomyces cerevisiae (strain ATCC 204508 / S288c) (Baker's yeast).